The chain runs to 471 residues: MFLLYLFTSFAAVSGVLGSSPSYNGLGLTPQMGWDNWNTFACDVSEQLLLDTADRISEIGLKDLGYTYVILDDCWSSGRTANGTLVADKEKFPNGMSHVADHLHNNNFLFGMYSSAGEYTCAGYPGSLGHEEEDAEFFASNGVDYLKYDNCYNKGQFGAPETSYKRYKAMSDALNKTGRPIFYSLCNWGQDLTHYWGSDIANSWRMSGDIYPQFTRPDSRCPCDGDQFDCAYAGFHCSIMNILNKAAPMGQNAGIGGWNDLDNLEVGVGNLTDDEEKAHFSMWAMVKSPLVIGADVNHLKASSYSIYSQASVIAINQDPKGVPATRVWRHQVPQTDKYGQGEIQFWSGPLDNGDQVIALLNGGIKPRPMNTNLEEIFFDSYLGFEQLSSNWDIYDLWANRVDNATSANILNNNSVGNATIYNATALSYKDGMAKNDTRLFGTKIGSISPDGLLNTTVPAHGIAFYRLRRST.

Residues 1 to 18 (MFLLYLFTSFAAVSGVLG) form the signal peptide. Cys42 and Cys74 form a disulfide bridge. Substrate contacts are provided by Asp72 and Asp73. Asn82 carries an N-linked (GlcNAc...) asparagine glycan. Cys121 and Cys151 are oxidised to a cystine. Position 147 (Lys147) interacts with substrate. The Nucleophile role is filled by Asp149. Residue Asn175 is glycosylated (N-linked (GlcNAc...) asparagine). Substrate is bound at residue Arg205. Asp209 (proton donor) is an active-site residue. Disulfide bonds link Cys221–Cys237 and Cys223–Cys230. Gln251 provides a ligand contact to substrate. N-linked (GlcNAc...) asparagine glycosylation is found at Asn270, Asn403, Asn412, Asn417, Asn422, Asn435, and Asn454.

This sequence belongs to the glycosyl hydrolase 27 family. As to quaternary structure, homotetramer.

It is found in the secreted. It catalyses the reaction Hydrolysis of terminal, non-reducing alpha-D-galactose residues in alpha-D-galactosides, including galactose oligosaccharides, galactomannans and galactolipids.. This is Alpha-galactosidase (MEL) from Saccharomyces pastorianus (strain ATCC 76529 / Carlsberg bottom yeast no.1 / CBS 1513 / CLIB 176 / NBRC 1167 / NCYC 396 / NRRL Y-12693) (Saaz-type lager yeast).